The sequence spans 294 residues: 2-oxo-3-(phosphooxy)propyl 3-oxoalkanoate synthase (294 aa).

Belongs to the AfsA family.

It carries out the reaction a medium-chain 3-oxoacyl-[ACP] + dihydroxyacetone phosphate = a (4-alkanoyl-5-oxo-2,5-dihydrofuran-3-yl)methyl phosphate + holo-[ACP] + H2O. In terms of biological role, involved in the biosynthesis of virginiae butanolide (VB), a gamma-butyrolactone autoregulator that triggers the production of the streptogramin antibiotic virginiamycin. The protein is 2-oxo-3-(phosphooxy)propyl 3-oxoalkanoate synthase of Streptomyces virginiae (Streptomyces cinnamonensis).